We begin with the raw amino-acid sequence, 81 residues long: MSHSVKIYDTCIGCTHCVRACPTDVLEMIPWDGCKAKQIASAPRTEDCVGCKRCESACPTDFLSVRVYLGPETTRSMALSY.

4Fe-4S ferredoxin-type domains are found at residues 2 to 31 (SHSV…MIPW) and 39 to 68 (IASA…VRVY). Cysteine 11, cysteine 14, cysteine 17, cysteine 21, cysteine 48, cysteine 51, cysteine 54, and cysteine 58 together coordinate [4Fe-4S] cluster.

In terms of assembly, the eukaryotic PSI reaction center is composed of at least 11 subunits. The cofactor is [4Fe-4S] cluster.

It is found in the plastid. Its subcellular location is the chloroplast thylakoid membrane. The catalysed reaction is reduced [plastocyanin] + hnu + oxidized [2Fe-2S]-[ferredoxin] = oxidized [plastocyanin] + reduced [2Fe-2S]-[ferredoxin]. Apoprotein for the two 4Fe-4S centers FA and FB of photosystem I (PSI); essential for photochemical activity. FB is the terminal electron acceptor of PSI, donating electrons to ferredoxin. The C-terminus interacts with PsaA/B/D and helps assemble the protein into the PSI complex. Required for binding of PsaD and PsaE to PSI. PSI is a plastocyanin-ferredoxin oxidoreductase, converting photonic excitation into a charge separation, which transfers an electron from the donor P700 chlorophyll pair to the spectroscopically characterized acceptors A0, A1, FX, FA and FB in turn. The polypeptide is Photosystem I iron-sulfur center (Zea mays (Maize)).